The sequence spans 330 residues: MQTLAQHLTSQAVNDSLSQLILTLADTSKAISHAVRHGALAGVLGATEQENVQGETQKKLDIITNDMLKDALKADGTVRGLASEEEDHVVEVSTNGQYLVCFDPLDGSSNIDINSLVGTIFSILPASAGELTETSFLQSGRNQLAAGYVLYGPSTMLALTTGQGVQLFTLHPETNEFLLTNAAMSISADTQEFAINMSNQRFWEAPMQTYIADLLLGKIGPREKSFNMRWIAAMVGDVHRVLSRGGIFTYPTDNKDPKKPYKLRLMYEANPMAFLVEQAGGKASTGYETILDIQPTHIHQRVAVILGSANEVDACLSYHGLDYSEEPGLD.

Residues E84, D103, L105, and D106 each contribute to the Mg(2+) site. Substrate is bound by residues 106 to 109 (DGSS), N196, and K262. Mg(2+) is bound at residue E268.

The protein belongs to the FBPase class 1 family. Homotetramer. Mg(2+) serves as cofactor.

It is found in the cytoplasm. The enzyme catalyses beta-D-fructose 1,6-bisphosphate + H2O = beta-D-fructose 6-phosphate + phosphate. It participates in carbohydrate biosynthesis; gluconeogenesis. This chain is Fructose-1,6-bisphosphatase class 1, found in Shewanella sp. (strain W3-18-1).